The following is a 124-amino-acid chain: Urease subunit beta (124 aa).

This sequence belongs to the urease beta subunit family. As to quaternary structure, heterotrimer of UreA (gamma), UreB (beta) and UreC (alpha) subunits. Three heterotrimers associate to form the active enzyme.

The protein localises to the cytoplasm. It catalyses the reaction urea + 2 H2O + H(+) = hydrogencarbonate + 2 NH4(+). It functions in the pathway nitrogen metabolism; urea degradation; CO(2) and NH(3) from urea (urease route): step 1/1. The chain is Urease subunit beta from Halalkalibacterium halodurans (strain ATCC BAA-125 / DSM 18197 / FERM 7344 / JCM 9153 / C-125) (Bacillus halodurans).